We begin with the raw amino-acid sequence, 21 residues long: Tertiapin (21 aa).

Disulfide bonds link Cys-3-Cys-14 and Cys-5-Cys-18.

Post-translationally, oxidation of Met-13 results in the loss of biological activity. An amidation at Lys-21 is suggested in Ref.1. Expressed by the venom gland.

The protein resides in the secreted. Functionally, presynaptic neurotoxin that blocks the inwardly rectifying Kir1.1/KCNJ1 and Kir3.1/3.4 (KCNJ3/KCNJ5) potassium channels with high affinity by binding to the M1-M2 linker region of these channels in a 1:1 stoichiometry. It may block the potassium channel pore by occluding its alpha helix into the channel vestibule. Tertiapin-Q also inhibits calcium-activated large conductance BK-type (KCNMA) potassium channels in a concentration-, and voltage-dependent manner, in addition to inhibiting Kir3.1/3.2 (KCNJ3/KCNJ6) heteromultimers potassium channels. It can prevent dose-dependently acetylcholine(ACh)-induced atrioventricular blocks in mammalian hearts, as KCNJ3/KCNJ5 channels (also named I(KACh), because these channels are activated by ACh) are found in mammalian myocytes. Interacts specifically with calmodulin in the presence of calcium. The protein is Tertiapin of Apis mellifera (Honeybee).